A 436-amino-acid chain; its full sequence is Adenylosuccinate synthetase (436 aa).

GTP is bound by residues 12–18 (GDEGKGK) and 40–42 (GHT). Asp-13 functions as the Proton acceptor in the catalytic mechanism. Mg(2+) is bound by residues Asp-13 and Gly-40. IMP is bound by residues 13-16 (DEGK), 38-41 (NAGH), Thr-128, Arg-142, Gln-223, Thr-238, and Arg-302. His-41 (proton donor) is an active-site residue. 298 to 304 (TTTGRRR) serves as a coordination point for substrate. Residues Arg-304, 330–332 (KLD), and 412–414 (SLG) contribute to the GTP site.

It belongs to the adenylosuccinate synthetase family. As to quaternary structure, homodimer. The cofactor is Mg(2+).

The protein resides in the cytoplasm. The enzyme catalyses IMP + L-aspartate + GTP = N(6)-(1,2-dicarboxyethyl)-AMP + GDP + phosphate + 2 H(+). Its pathway is purine metabolism; AMP biosynthesis via de novo pathway; AMP from IMP: step 1/2. Its function is as follows. Plays an important role in the de novo pathway of purine nucleotide biosynthesis. Catalyzes the first committed step in the biosynthesis of AMP from IMP. This chain is Adenylosuccinate synthetase, found in Prochlorococcus marinus (strain MIT 9312).